The chain runs to 286 residues: Energy-coupling factor transporter ATP-binding protein EcfA2 (286 aa).

The 244-residue stretch at 3 to 246 folds into the ABC transporter domain; it reads IRFDNVSYTY…KEKLADWHIA (244 aa). 40 to 47 contacts ATP; sequence GQTGSGKS.

This sequence belongs to the ABC transporter superfamily. Energy-coupling factor EcfA family. Forms a stable energy-coupling factor (ECF) transporter complex composed of 2 membrane-embedded substrate-binding proteins (S component), 2 ATP-binding proteins (A component) and 2 transmembrane proteins (T component).

It localises to the cell membrane. Its function is as follows. ATP-binding (A) component of a common energy-coupling factor (ECF) ABC-transporter complex. Unlike classic ABC transporters this ECF transporter provides the energy necessary to transport a number of different substrates. The protein is Energy-coupling factor transporter ATP-binding protein EcfA2 of Staphylococcus aureus (strain bovine RF122 / ET3-1).